Reading from the N-terminus, the 183-residue chain is CASP-like protein UU1 (183 aa).

The Cytoplasmic portion of the chain corresponds to 1 to 33; that stretch reads MEESQQQSTKFDAPPSPYVPSRVYLAQIYWKKP. Residues 34–54 traverse the membrane as a helical segment; that stretch reads AIVVLRVLQFVFSLIAFSVMA. Over 55–72 the chain is Extracellular; it reads DLLHDVQGSIKSLSYTVA. The helical transmembrane segment at 73 to 93 threads the bilayer; that stretch reads IGVLACAYALAQLSFSLWCVI. Residues 94–118 lie on the Cytoplasmic side of the membrane; it reads RGATSSSGVTPLYQYATFICDQMST. The chain crosses the membrane as a helical span at residues 119-139; that stretch reads YFLISAASATATLIDVSGVCG. The Extracellular portion of the chain corresponds to 140–156; it reads SNGSGTNLCSRSTASVT. N-linked (GlcNAc...) asparagine glycosylation occurs at Asn141. Residues 157–177 form a helical membrane-spanning segment; it reads FAFLAFLAFSASSVLTGYYLV. The Cytoplasmic segment spans residues 178–183; that stretch reads KCILKA.

The protein belongs to the Casparian strip membrane proteins (CASP) family. In terms of assembly, homodimer and heterodimers.

It is found in the cell membrane. The sequence is that of CASP-like protein UU1 from Selaginella moellendorffii (Spikemoss).